The following is a 112-amino-acid chain: MNLAPTTLLLFAATALAELVGCYLPYLWLRNGGSVWLLLPTALRLASFVWLLSLHPDASGRVYAAYGGVYIASALGLWLWWVDGVTPTRWDLLGAVCCLFGMAIIMFAPRSA.

4 helical membrane-spanning segments follow: residues 8 to 28 (LLLF…PYLW), 32 to 52 (GGSV…VWLL), 62 to 82 (VYAA…LWWV), and 92 to 112 (LLGA…PRSA).

This sequence belongs to the UPF0060 family.

It is found in the cell inner membrane. This is UPF0060 membrane protein XOO1694 from Xanthomonas oryzae pv. oryzae (strain MAFF 311018).